Here is a 313-residue protein sequence, read N- to C-terminus: Olfactory receptor 5H1 (313 aa).

The Extracellular segment spans residues Met1–Phe28. N-linked (GlcNAc...) asparagine glycosylation occurs at Asn5. Residues Leu29–Ile49 traverse the membrane as a helical segment. Over Trp50 to His56 the chain is Cytoplasmic. A helical transmembrane segment spans residues Ile57–Val77. Residues Thr78–Lys98 are Extracellular-facing. Cysteines 97 and 179 form a disulfide. Residues Ile99–Ala119 form a helical membrane-spanning segment. The Cytoplasmic portion of the chain corresponds to Tyr120–Arg143. The chain crosses the membrane as a helical span at residues Leu144–Phe164. The Extracellular segment spans residues Arg165–Asn195. A helical membrane pass occupies residues Phe196–Val216. The Cytoplasmic segment spans residues Ser217–Thr240. The helical transmembrane segment at Cys241 to Gly261 threads the bilayer. Residues Pro262 to Asp271 are Extracellular-facing. A helical transmembrane segment spans residues Met272 to Leu292. The Cytoplasmic portion of the chain corresponds to Arg293–Tyr313.

It belongs to the G-protein coupled receptor 1 family.

The protein resides in the cell membrane. Its function is as follows. Odorant receptor. In Homo sapiens (Human), this protein is Olfactory receptor 5H1 (OR5H1).